The following is a 198-amino-acid chain: Proteasome subunit beta 2 (198 aa).

A propeptide spans 1 to 4 (removed in mature form; by autocatalysis); it reads MVLA. The active-site Nucleophile is Thr-5.

It belongs to the peptidase T1B family. In terms of assembly, the 20S proteasome core is composed of 14 alpha and 14 beta subunits that assemble into four stacked heptameric rings, resulting in a barrel-shaped structure. The two inner rings, each composed of seven catalytic beta subunits, are sandwiched by two outer rings, each composed of seven alpha subunits. The catalytic chamber with the active sites is on the inside of the barrel. Has a gated structure, the ends of the cylinder being occluded by the N-termini of the alpha-subunits. Is capped at one or both ends by the proteasome regulatory ATPase, PAN.

Its subcellular location is the cytoplasm. It catalyses the reaction Cleavage of peptide bonds with very broad specificity.. With respect to regulation, the formation of the proteasomal ATPase PAN-20S proteasome complex, via the docking of the C-termini of PAN into the intersubunit pockets in the alpha-rings, triggers opening of the gate for substrate entry. Interconversion between the open-gate and close-gate conformations leads to a dynamic regulation of the 20S proteasome proteolysis activity. Functionally, component of the proteasome core, a large protease complex with broad specificity involved in protein degradation. The sequence is that of Proteasome subunit beta 2 from Korarchaeum cryptofilum (strain OPF8).